Consider the following 67-residue polypeptide: MNQEAAETARESLELVFRMSNILETGLDRHTLSVLIALCDIGLNPEALATLVKELRRDSATTTTTVD.

The protein belongs to the MOZART1 family. As to quaternary structure, part of the gamma-tubulin complex. Interacts with GIP1 and GCP3. As to expression, mostly expressed in siliques and flowers, and, to a lower extent, in leaves, roots and seedlings, with highest levels in young tissues, meristematic cells, and the vasculature.

The protein localises to the cytoplasm. It is found in the cytoskeleton. It localises to the microtubule organizing center. The protein resides in the spindle. Its subcellular location is the nucleus. The protein localises to the phragmoplast. It is found in the nucleus envelope. Required for gamma-tubulin complex recruitment to the microtubule organizing centers (MTOCs). During mitosis, modulates gamma-tubulin complex localization, spindle stability and chromosomal segregation. Necessary for gametophyte development and embryogenesis. In Arabidopsis thaliana (Mouse-ear cress), this protein is Mitotic-spindle organizing protein 1A (GIP2).